We begin with the raw amino-acid sequence, 142 residues long: Transcriptional regulator MraZ (142 aa).

SpoVT-AbrB domains follow at residues 5-51 and 77-120; these read ASAL…PRPE and AADV…DAAT.

It belongs to the MraZ family. Forms oligomers.

It is found in the cytoplasm. It localises to the nucleoid. In Ralstonia nicotianae (strain ATCC BAA-1114 / GMI1000) (Ralstonia solanacearum), this protein is Transcriptional regulator MraZ.